The chain runs to 236 residues: Peroxisomal membrane protein 11D (236 aa).

At G2 the chain carries N-acetylglycine. Over 2 to 92 (GTTLDVSRAE…LPLVLLGKSK (91 aa)) the chain is Cytoplasmic. The chain crosses the membrane as a helical span at residues 93–109 (NALLSTFLFLDQIVWLG). Residues 110-207 (RSGIYKNKER…LLQLAPTKIT (98 aa)) are Lumenal-facing. Residues 208–227 (PRVTGAFGFITSIISCYQLL) form a helical membrane-spanning segment. The Cytoplasmic portion of the chain corresponds to 228 to 236 (PTRPKIKTP).

This sequence belongs to the peroxin-11 family. Homooligomer. Interacts with ARC5 and FIS1B on peroxisomes. In terms of tissue distribution, expressed in developing siliques.

The protein resides in the peroxisome membrane. Its function is as follows. Involved in peroxisomal proliferation. Promotes peroxisomal duplication, aggregation or elongation without fission. The sequence is that of Peroxisomal membrane protein 11D (PEX11D) from Arabidopsis thaliana (Mouse-ear cress).